The primary structure comprises 256 residues: Thiazole synthase (256 aa).

The active-site Schiff-base intermediate with DXP is lysine 95. Residues glycine 156, 182–183 (AG), and 204–205 (NT) each bind 1-deoxy-D-xylulose 5-phosphate.

The protein belongs to the ThiG family. As to quaternary structure, homotetramer. Forms heterodimers with either ThiH or ThiS.

It localises to the cytoplasm. The catalysed reaction is [ThiS sulfur-carrier protein]-C-terminal-Gly-aminoethanethioate + 2-iminoacetate + 1-deoxy-D-xylulose 5-phosphate = [ThiS sulfur-carrier protein]-C-terminal Gly-Gly + 2-[(2R,5Z)-2-carboxy-4-methylthiazol-5(2H)-ylidene]ethyl phosphate + 2 H2O + H(+). It functions in the pathway cofactor biosynthesis; thiamine diphosphate biosynthesis. In terms of biological role, catalyzes the rearrangement of 1-deoxy-D-xylulose 5-phosphate (DXP) to produce the thiazole phosphate moiety of thiamine. Sulfur is provided by the thiocarboxylate moiety of the carrier protein ThiS. In vitro, sulfur can be provided by H(2)S. This is Thiazole synthase from Salmonella agona (strain SL483).